We begin with the raw amino-acid sequence, 88 residues long: Putative cancer susceptibility gene HEPN1 protein (88 aa).

In terms of tissue distribution, expressed in liver. Expression is either down-regulated or lost in hepatocellular carcinomas (HCC).

It is found in the cytoplasm. In Homo sapiens (Human), this protein is Putative cancer susceptibility gene HEPN1 protein (HEPN1).